The sequence spans 321 residues: Cytochrome f (321 aa).

Residues 1 to 38 (MKKNFYTISKTMSRSLKLILFSVFIGFSIFLIPQPTWA) form the signal peptide. The heme site is built by Tyr39, Cys59, Cys62, and His63. Residues 288 to 308 (VIGMIIFFIGVGLSQIMLVLK) form a helical membrane-spanning segment.

The protein belongs to the cytochrome f family. In terms of assembly, the 4 large subunits of the cytochrome b6-f complex are cytochrome b6, subunit IV (17 kDa polypeptide, PetD), cytochrome f and the Rieske protein, while the 4 small subunits are PetG, PetL, PetM and PetN. The complex functions as a dimer. Heme is required as a cofactor.

It is found in the cellular thylakoid membrane. In terms of biological role, component of the cytochrome b6-f complex, which mediates electron transfer between photosystem II (PSII) and photosystem I (PSI), cyclic electron flow around PSI, and state transitions. This Prochlorococcus marinus (strain NATL2A) protein is Cytochrome f.